The primary structure comprises 385 residues: Succinate--CoA ligase [ADP-forming] subunit beta (385 aa).

Residues 9-244 (KEVLRKYGVS…LDEEDPKEIE (236 aa)) form the ATP-grasp domain. Residues Lys46, 53 to 55 (GRG), Glu99, Cys102, and Glu107 contribute to the ATP site. 2 residues coordinate Mg(2+): Asn199 and Asp213. At Ser220 the chain carries Phosphoserine. Residues Asn264 and 321 to 323 (GIM) contribute to the substrate site.

It belongs to the succinate/malate CoA ligase beta subunit family. As to quaternary structure, heterotetramer of two alpha and two beta subunits. Interacts with BrxC. The cofactor is Mg(2+).

The catalysed reaction is succinate + ATP + CoA = succinyl-CoA + ADP + phosphate. It catalyses the reaction GTP + succinate + CoA = succinyl-CoA + GDP + phosphate. The protein operates within carbohydrate metabolism; tricarboxylic acid cycle; succinate from succinyl-CoA (ligase route): step 1/1. Succinyl-CoA synthetase functions in the citric acid cycle (TCA), coupling the hydrolysis of succinyl-CoA to the synthesis of either ATP or GTP and thus represents the only step of substrate-level phosphorylation in the TCA. The beta subunit provides nucleotide specificity of the enzyme and binds the substrate succinate, while the binding sites for coenzyme A and phosphate are found in the alpha subunit. The protein is Succinate--CoA ligase [ADP-forming] subunit beta of Bacillus subtilis (strain 168).